Consider the following 229-residue polypeptide: MLHLENIRVRQGSFTLSAHLTIAKGARVALMGASGSGKSTLLSTLSGFLWPDAGRITMAGADVAKTPVADRPISILFQDGNLFPHLSVFDNVALGIRPNLKLGSEDERRVTRALTQVGLEGMEQRKPSALSGGQQSRVALARMLLRDKPVALLDEPFSALDPGLRREMLSLVRKLCDETGQTLIMATHDLRDAERLCDRVLLLDDGKVVLDAPLAEAVANNAEPLRPWM.

An ABC transporter domain is found at L2–M229. G32–S39 provides a ligand contact to ATP.

This sequence belongs to the ABC transporter superfamily. Thiamine importer (TC 3.A.1.19.1) family. As to quaternary structure, the complex is composed of two ATP-binding proteins (ThiQ), two transmembrane proteins (ThiP) and a solute-binding protein (ThiB).

Its subcellular location is the cell inner membrane. It carries out the reaction thiamine(out) + ATP + H2O = thiamine(in) + ADP + phosphate + H(+). In terms of biological role, part of the ABC transporter complex ThiBPQ involved in thiamine import. Responsible for energy coupling to the transport system. This chain is Thiamine import ATP-binding protein ThiQ, found in Jannaschia sp. (strain CCS1).